Here is a 121-residue protein sequence, read N- to C-terminus: DNA-directed RNA polymerase subunit omega (121 aa).

A disordered region spans residues 95-121 (DGDAANDLQGEEDDLGLGLDEAEDLGF). The segment covering 103–121 (QGEEDDLGLGLDEAEDLGF) has biased composition (acidic residues).

This sequence belongs to the RNA polymerase subunit omega family. In terms of assembly, the RNAP catalytic core consists of 2 alpha, 1 beta, 1 beta' and 1 omega subunit. When a sigma factor is associated with the core the holoenzyme is formed, which can initiate transcription.

The catalysed reaction is RNA(n) + a ribonucleoside 5'-triphosphate = RNA(n+1) + diphosphate. Promotes RNA polymerase assembly. Latches the N- and C-terminal regions of the beta' subunit thereby facilitating its interaction with the beta and alpha subunits. The chain is DNA-directed RNA polymerase subunit omega from Magnetococcus marinus (strain ATCC BAA-1437 / JCM 17883 / MC-1).